The primary structure comprises 338 residues: Tagatose 1,6-diphosphate aldolase (338 aa).

The protein belongs to the aldolase LacD family.

It carries out the reaction D-tagatofuranose 1,6-bisphosphate = D-glyceraldehyde 3-phosphate + dihydroxyacetone phosphate. Its pathway is carbohydrate metabolism; D-tagatose 6-phosphate degradation; D-glyceraldehyde 3-phosphate and glycerone phosphate from D-tagatose 6-phosphate: step 2/2. This Listeria innocua serovar 6a (strain ATCC BAA-680 / CLIP 11262) protein is Tagatose 1,6-diphosphate aldolase.